The chain runs to 400 residues: Phosphoglycerate kinase (400 aa).

Residues 21 to 23 (DFN), Arg-37, 60 to 63 (HFGR), Arg-119, and Arg-152 each bind substrate. ATP-binding positions include Lys-205, Gly-296, Glu-327, and 353–356 (GGDT).

The protein belongs to the phosphoglycerate kinase family. Monomer.

Its subcellular location is the cytoplasm. The enzyme catalyses (2R)-3-phosphoglycerate + ATP = (2R)-3-phospho-glyceroyl phosphate + ADP. It functions in the pathway carbohydrate degradation; glycolysis; pyruvate from D-glyceraldehyde 3-phosphate: step 2/5. The chain is Phosphoglycerate kinase from Aliarcobacter butzleri (strain RM4018) (Arcobacter butzleri).